The following is an 84-amino-acid chain: Small ribosomal subunit protein bS18A (84 aa).

It belongs to the bacterial ribosomal protein bS18 family. In terms of assembly, part of the 30S ribosomal subunit. Forms a tight heterodimer with protein bS6.

In terms of biological role, binds as a heterodimer with protein bS6 to the central domain of the 16S rRNA, where it helps stabilize the platform of the 30S subunit. In Mycobacterium marinum (strain ATCC BAA-535 / M), this protein is Small ribosomal subunit protein bS18A.